Consider the following 426-residue polypeptide: Histidine--tRNA ligase (426 aa).

This sequence belongs to the class-II aminoacyl-tRNA synthetase family. As to quaternary structure, homodimer.

It localises to the cytoplasm. The enzyme catalyses tRNA(His) + L-histidine + ATP = L-histidyl-tRNA(His) + AMP + diphosphate + H(+). This is Histidine--tRNA ligase from Geobacillus kaustophilus (strain HTA426).